The following is a 129-amino-acid chain: uncharacterized protein (129 aa).

A compositionally biased stretch (basic and acidic residues) spans 91–114; the sequence is ASEKVGEMKEAASEKASEMKEAVS. Residues 91 to 129 are disordered; that stretch reads ASEKVGEMKEAASEKASEMKEAVSEKATQAVDAVKEATK.

Belongs to the LEA type 1 family.

This is an uncharacterized protein from Haemophilus influenzae (strain ATCC 51907 / DSM 11121 / KW20 / Rd).